A 1343-amino-acid polypeptide reads, in one-letter code: DNA-directed RNA polymerase subunit beta (1343 aa).

The protein belongs to the RNA polymerase beta chain family. In terms of assembly, the RNAP catalytic core consists of 2 alpha, 1 beta, 1 beta' and 1 omega subunit. When a sigma factor is associated with the core the holoenzyme is formed, which can initiate transcription.

The catalysed reaction is RNA(n) + a ribonucleoside 5'-triphosphate = RNA(n+1) + diphosphate. Its function is as follows. DNA-dependent RNA polymerase catalyzes the transcription of DNA into RNA using the four ribonucleoside triphosphates as substrates. This Haemophilus influenzae (strain PittEE) protein is DNA-directed RNA polymerase subunit beta.